The chain runs to 264 residues: Thiazole synthase (264 aa).

Lys-98 (schiff-base intermediate with DXP) is an active-site residue. Residues Gly-159, 185–186 (AG), and 207–208 (AT) each bind 1-deoxy-D-xylulose 5-phosphate.

Belongs to the ThiG family. As to quaternary structure, homotetramer. Forms heterodimers with either ThiH or ThiS.

It is found in the cytoplasm. It catalyses the reaction [ThiS sulfur-carrier protein]-C-terminal-Gly-aminoethanethioate + 2-iminoacetate + 1-deoxy-D-xylulose 5-phosphate = [ThiS sulfur-carrier protein]-C-terminal Gly-Gly + 2-[(2R,5Z)-2-carboxy-4-methylthiazol-5(2H)-ylidene]ethyl phosphate + 2 H2O + H(+). It functions in the pathway cofactor biosynthesis; thiamine diphosphate biosynthesis. Functionally, catalyzes the rearrangement of 1-deoxy-D-xylulose 5-phosphate (DXP) to produce the thiazole phosphate moiety of thiamine. Sulfur is provided by the thiocarboxylate moiety of the carrier protein ThiS. In vitro, sulfur can be provided by H(2)S. The chain is Thiazole synthase from Mycobacterium marinum (strain ATCC BAA-535 / M).